A 485-amino-acid chain; its full sequence is NADH-quinone oxidoreductase subunit N (485 aa).

Helical transmembrane passes span 8–28 (LIAL…MLSI), 35–55 (FLNA…LWFV), 75–95 (LYTG…YPWL), 105–125 (FYLL…ANHL), 127–147 (ALFL…GYAF), 159–179 (YTIL…LVYA), 203–223 (LLAG…LVPF), 235–255 (PAPV…GVVM), 271–291 (VVLG…ALSQ), 297–317 (LLGY…IALQ), 326–346 (VGVY…VVSL), 374–394 (AVMT…GFIG), 408–430 (WWLV…RVAV), and 455–475 (IVVL…QPLI).

This sequence belongs to the complex I subunit 2 family. NDH-1 is composed of 13 different subunits. Subunits NuoA, H, J, K, L, M, N constitute the membrane sector of the complex.

The protein resides in the cell inner membrane. It catalyses the reaction a quinone + NADH + 5 H(+)(in) = a quinol + NAD(+) + 4 H(+)(out). Its function is as follows. NDH-1 shuttles electrons from NADH, via FMN and iron-sulfur (Fe-S) centers, to quinones in the respiratory chain. The immediate electron acceptor for the enzyme in this species is believed to be ubiquinone. Couples the redox reaction to proton translocation (for every two electrons transferred, four hydrogen ions are translocated across the cytoplasmic membrane), and thus conserves the redox energy in a proton gradient. The protein is NADH-quinone oxidoreductase subunit N of Klebsiella pneumoniae subsp. pneumoniae (strain ATCC 700721 / MGH 78578).